The primary structure comprises 1835 residues: AT-rich interactive domain-containing protein 2 (1835 aa).

N-acetylalanine is present on Ala2. Ser4 carries the post-translational modification Phosphoserine. Residues Lys7, Lys15, and Lys119 each participate in a glycyl lysine isopeptide (Lys-Gly) (interchain with G-Cter in SUMO2) cross-link. The ARID domain maps to 13–105 (RRKGLAFLDE…YLEKYEKVHH (93 aa)). The LXXLL signature appears at 313–317 (LRFLL). Residues 524 to 603 (ACQWLNAHFE…IHVVGVKRRA (80 aa)) constitute a DNA-binding region (RFX-type winged-helix). A Glycyl lysine isopeptide (Lys-Gly) (interchain with G-Cter in SUMO2) cross-link involves residue Lys555. Phosphoserine is present on residues Ser631 and Ser635. Phosphothreonine is present on Thr653. Ser689 is subject to Phosphoserine. The residue at position 692 (Thr692) is a Phosphothreonine. Disordered regions lie at residues 819 to 844 (QQLI…QSQD), 962 to 1057 (LTGQ…SGES), 1266 to 1287 (MENP…KENE), 1295 to 1314 (NGRK…KIQS), and 1321 to 1341 (LISN…KQNS). Composition is skewed to low complexity over residues 823-843 (TTSP…SQSQ), 985-996 (PTAMSSSSTPQS), and 1025-1044 (QVQV…QPQQ). Ser1300 is modified (phosphoserine). Polar residues predominate over residues 1301-1314 (DSSLPPSNSGKIQS). Phosphoserine occurs at positions 1391 and 1496. 2 disordered regions span residues 1488–1522 (DSGS…AEDT) and 1572–1629 (SAVQ…RKPG). Positions 1491–1509 (SKVSHSPALSSDVRSTNGT) are enriched in polar residues. The span at 1513–1522 (KTVKRPAEDT) shows a compositional bias: basic and acidic residues. A compositionally biased stretch (polar residues) spans 1573-1592 (AVQQKQQHPPTYVQNVVPQN). The span at 1602-1623 (QVQGQPNSSQPSPFSGSSQPGD) shows a compositional bias: low complexity. The segment at 1632-1657 (FMCLWQSCKKWFQTPSQVFYHAATEH) adopts a C2H2-type zinc-finger fold. Glycyl lysine isopeptide (Lys-Gly) (interchain with G-Cter in SUMO2) cross-links involve residues Lys1701, Lys1716, and Lys1731. The tract at residues 1703–1728 (DEPGQAGSQKSSTKQPTVGGTSSTPR) is disordered. Over residues 1708–1728 (AGSQKSSTKQPTVGGTSSTPR) the composition is skewed to polar residues.

As to quaternary structure, component of the SWI/SNF-B (PBAF) chromatin remodeling complex, at least composed of SMARCA4/BRG1, SMARCB1/BAF47/SNF5, ACTL6A/BAF53A or ACTL6B/BAF53B, SMARCE1/BAF57, SMARCD1/BAF60A, SMARCD2/BAF60B, perhaps SMARCD3/BAF60C, SMARCC1/BAF155, SMARCC2/BAF170, PBRM1/BAF180, ARID2/BAF200 and actin. Interacts with SRF. Forms complexes with SRF and SRF cofactors MYOCD, NKX2-5 and SRFBP1. As to expression, highly expressed in heart.

It is found in the nucleus. Functionally, involved in transcriptional activation and repression of select genes by chromatin remodeling (alteration of DNA-nucleosome topology). Required for the stability of the SWI/SNF chromatin remodeling complex SWI/SNF-B (PBAF). May be involved in targeting the complex to different genes. May be involved in regulating transcriptional activation of cardiac genes. In Homo sapiens (Human), this protein is AT-rich interactive domain-containing protein 2.